The primary structure comprises 535 residues: Pentatricopeptide repeat-containing protein At5g16420, mitochondrial (535 aa).

A mitochondrion-targeting transit peptide spans 1-28 (MFLSRVNPTRFPPFVASRRLFSASASAA). 12 PPR repeats span residues 82-112 (NYDTYHSILFKLSRARAFDPVESLMADLRNS), 119-153 (GENLFIDLLRNYGLAGRYESSMRIFLRIPDFGVKR), 154-189 (SVRSLNTLLNVLIQNQRFDLVHAMFKNSKESFGITP), 190-224 (NIFTCNLLVKALCKKNDIESAYKVLDEIPSMGLVP), 225-259 (NLVTYTTILGGYVARGDMESAKRVLEEMLDRGWYP), 260-294 (DATTYTVLMDGYCKLGRFSEAATVMDDMEKNEIEP), 295-329 (NEVTYGVMIRALCKEKKSGEARNMFDEMLERSFMP), 330-364 (DSSLCCKVIDALCEDHKVDEACGLWRKMLKNNCMP), 365-395 (DNALLSTLIHWLCKEGRVTEARKLFDEFEKG), 399-433 (SLLTYNTLIAGMCEKGELTEAGRLWDDMYERKCKP), 434-468 (NAFTYNVLIEGLSKNGNVKEGVRVLEEMLEIGCFP), and 469-503 (NKTTFLILFEGLQKLGKEEDAMKIVSMAVMNGKVD).

Belongs to the PPR family. P subfamily.

The protein resides in the mitochondrion. The chain is Pentatricopeptide repeat-containing protein At5g16420, mitochondrial from Arabidopsis thaliana (Mouse-ear cress).